The sequence spans 61 residues: Insect toxin LqhIT5 (61 aa).

One can recognise an LCN-type CS-alpha/beta domain in the interval 1–61 (DGYIRGGDGC…EWKYETNTCG (61 aa)). Intrachain disulfides connect cysteine 10/cysteine 60, cysteine 14/cysteine 35, cysteine 21/cysteine 42, and cysteine 25/cysteine 44.

It belongs to the long (4 C-C) scorpion toxin superfamily. Sodium channel inhibitor family. Beta subfamily. Expressed by the venom gland.

Its subcellular location is the secreted. Excitatory insect beta-toxins induce a spastic paralysis. They bind voltage-independently at site-4 of sodium channels (Nav) and shift the voltage of activation toward more negative potentials thereby affecting sodium channel activation and promoting spontaneous and repetitive firing. This toxin is active only on insects. It operates by inducing a fast contraction paralysis without depressant activity. It is more similar to the excitatory toxins in its mode of action and the depressant toxins in its primary structure. This is Insect toxin LqhIT5 from Leiurus hebraeus (Hebrew deathstalker scorpion).